We begin with the raw amino-acid sequence, 415 residues long: Casein kinase 1-like protein 3 (415 aa).

One can recognise a Protein kinase domain in the interval 9–277 (YKLGRKIGGG…FLKRLFRDLF (269 aa)). Residues 15–23 (IGGGSFGEI) and Lys38 contribute to the ATP site. Asp128 serves as the catalytic Proton acceptor. Polar residues-rich tracts occupy residues 303–314 (NQSQAVPGSSNP) and 373–415 (NMPS…SPEK). Disordered regions lie at residues 303–330 (NQSQ…GPNI) and 344–415 (NAIG…SPEK).

The protein belongs to the protein kinase superfamily. CK1 Ser/Thr protein kinase family. Casein kinase I subfamily. In terms of processing, slightly autophosphorylated. Expressed in seedlings, stems, leaves and flowers.

It is found in the cytoplasm. The protein resides in the nucleus. The catalysed reaction is L-seryl-[protein] + ATP = O-phospho-L-seryl-[protein] + ADP + H(+). It catalyses the reaction L-threonyl-[protein] + ATP = O-phospho-L-threonyl-[protein] + ADP + H(+). Its function is as follows. Protein kinase involved in blue light responses (e.g. hypocotyl elongation and flowering) by phosphorylating CRY2 to reduce its stability. This Arabidopsis thaliana (Mouse-ear cress) protein is Casein kinase 1-like protein 3.